The following is a 289-amino-acid chain: MAPKRQSAILPQPKKPRPAAAPKLEDKSASPGLPKGEKEQQEAIEHIDEVQNEIDRLNEQASEEILKVEQKYNKLRQPFFQKRSELIAKIPNFWVTTFVNHPQVSALLGEEDEEALHYLTRVEVTEFEDIKSGYRIDFYFDENPYFENKVLSKEFHLNESGDPSSKSTEIKWKSGKDLTKRSSQTQNKASRKRQHEEPESFFTWFTDHSDAGADELGEVIKDDIWPNPLQYYLVPDMDDEEGEAEDDDDDDEEEEGLEDIDEEGDEDEGEEDDDEDEGEEGEEDEGEDD.

The tract at residues 1-45 (MAPKRQSAILPQPKKPRPAAAPKLEDKSASPGLPKGEKEQQEAIE) is disordered. A N,N,N-trimethylalanine; by NTM1 modification is found at alanine 2. At serine 7 the chain carries Phosphoserine. Proline 11 carries the post-translational modification N6-acetyllysine. A Phosphoserine modification is found at lysine 15. Lysine 23 is modified (N6-acetyllysine). Lysine 23 bears the Phosphothreonine mark. Serine 28 bears the Phosphoserine mark. Residues 31 to 77 (PGLPKGEKEQQEAIEHIDEVQNEIDRLNEQASEEILKVEQKYNKLRQ) form a dimerization region. Residues 35 to 45 (KGEKEQQEAIE) are compositionally biased toward basic and acidic residues. Serine 62 bears the Phosphoserine mark. At lysine 67 the chain carries N6-acetyllysine. The tract at residues 78-224 (PFFQKRSELI…ELGEVIKDDI (147 aa)) is earmuff domain. Tyrosine 145 is modified (phosphotyrosine). Lysine 149 carries the N6-acetyllysine modification. Residue lysine 153 forms a Glycyl lysine isopeptide (Lys-Gly) (interchain with G-Cter in ubiquitin) linkage. 2 disordered regions span residues 157–206 (LNES…TWFT) and 235–289 (PDMD…GEDD). Positions 168–180 (TEIKWKSGKDLTK) are enriched in basic and acidic residues. Position 171 is an N6-acetyllysine (lysine 171). The segment covering 236–289 (DMDDEEGEAEDDDDDDEEEEGLEDIDEEGDEDEGEEDDDEDEGEEGEEDEGEDD) has biased composition (acidic residues).

The protein belongs to the nucleosome assembly protein (NAP) family. As to quaternary structure, headphone-shaped homodimer. Isoform 1 and isoform 2 interact directly with each other and with ANP32A within the tripartite INHAT (inhibitor of acetyltransferases) complex. Isoform 1 and isoform 2 interact also with histones. Isoform 2 is a omponent of the SET complex, composed of at least ANP32A, APEX1, HMGB2, NME1, SET and TREX1, but not NME2 or TREX2. Within this complex, directly interacts with ANP32A, NME1, HMGB2 and TREX1; the interaction with ANP32A is enhanced after cleavage. Interacts with APBB1, CHTOP, SETBP1, SGO1. In terms of processing, some glutamate residues are glycylated by TTLL8. This modification occurs exclusively on glutamate residues and results in a glycine chain on the gamma-carboxyl group. N-terminus of isoform 1 is methylated by METTL11A/NTM1. Mainly trimethylated. Post-translationally, cleaved after Lys-176 by GZMA. The cleavage inhibits its nucleosome assembly activity and disrupts the inhibition on NME1.

Its subcellular location is the cytoplasm. It localises to the cytosol. The protein localises to the endoplasmic reticulum. It is found in the nucleus. The protein resides in the nucleoplasm. Multitasking protein, involved in apoptosis, transcription, nucleosome assembly and histone chaperoning. Isoform 2 anti-apoptotic activity is mediated by inhibition of the GZMA-activated DNase, NME1. In the course of cytotoxic T-lymphocyte (CTL)-induced apoptosis, GZMA cleaves SET, disrupting its binding to NME1 and releasing NME1 inhibition. Isoform 1 and isoform 2 are potent inhibitors of protein phosphatase 2A. Isoform 1 and isoform 2 inhibit EP300/CREBBP and PCAF-mediated acetylation of histones (HAT) and nucleosomes, most probably by masking the accessibility of lysines of histones to the acetylases. The predominant target for inhibition is histone H4. HAT inhibition leads to silencing of HAT-dependent transcription and prevents active demethylation of DNA. Both isoforms stimulate DNA replication of the adenovirus genome complexed with viral core proteins; however, isoform 2 specific activity is higher. This chain is Protein SET (Set), found in Mus musculus (Mouse).